The following is a 1746-amino-acid chain: Inactive tyrosine-protein kinase PEAK1 (1746 aa).

Residues Lys44–Ala66 are disordered. At Ser281 the chain carries Phosphoserine. Disordered stretches follow at residues Gln334–Glu411 and Leu489–Gly517. The span at Ser338–Thr349 shows a compositional bias: low complexity. A compositionally biased stretch (polar residues) spans Glu355–Ile364. Residues Pro492–Ser513 are compositionally biased toward low complexity. A phosphoserine mark is found at Ser540, Ser572, and Ser587. The segment at Ile551 to Asn577 is disordered. 2 positions are modified to phosphotyrosine: Tyr635 and Tyr641. Ser648 is subject to Phosphoserine. Position 665 is a phosphotyrosine (Tyr665). Disordered regions lie at residues Glu671–Gly700, Leu713–Ser764, Asp802–Ala920, Val1052–Pro1102, and Gly1138–Lys1158. Positions Pro675–Ser694 are enriched in polar residues. A compositionally biased stretch (low complexity) spans Ser718–Ser730. Composition is skewed to polar residues over residues Thr748 to Ser758 and Leu820 to Lys841. Residues Ser826 and Ser854 each carry the phosphoserine modification. Positions Ser864–Arg874 are enriched in pro residues. Residues His889–Ser902 show a composition bias toward polar residues. At Ser898 the chain carries Phosphoserine. Composition is skewed to basic and acidic residues over residues Thr903 to Ala920, Val1052 to Arg1062, and Glu1084 to Ile1094. At Thr1151 the chain carries Phosphothreonine. Position 1188 is a phosphotyrosine (Tyr1188). The interval Glu1285–Ala1311 is required for homodimerization. In terms of domain architecture, Protein kinase spans Gln1313–Phe1675. Ser1374 carries the post-translational modification Phosphoserine. The interval Leu1402–Arg1456 is disordered. Positions Glu1406–Glu1423 are enriched in acidic residues. Over residues Asp1424 to Asn1433 the composition is skewed to basic and acidic residues. The segment covering Ala1440 to Val1450 has biased composition (polar residues). A required for homodimerization region spans residues Pro1670 to Leu1743.

The protein belongs to the protein kinase superfamily. Homodimer. Interacts with BCAR1 and CRK. Interacts with PRAG1. Interacts (when phosphorylated at Tyr-1188) with SHC1 (via PID domain). Found in a complex with PPP1CA, PPP1CC, SHC1 and PEAK1. Interacts (when phosphorylated at Tyr-635) with tensin TNS3 (when phosphorylated on the SH2 domain); TNS3 also interacts with integrins ITGB1, ITGB3 and ITGB5 and mediates their association with PEAK1. Interacts with RASAL2 and GRB2. In terms of processing, phosphorylated on tyrosine in a CSK-dependent manner in response to adhesion to fibronectin and to EGF stimulation. Phosphorylation at Tyr-665 by a Src family kinase controls subcellular localization to focal adhesion and focal adhesion dynamics. Phosphorylation at Tyr-1188 is essential for binding to SHC1. Phosphorylation at Tyr-635 promotes interaction with tensin TNS3.

It localises to the cytoplasm. Its subcellular location is the cytoskeleton. It is found in the cell junction. The protein resides in the focal adhesion. Its function is as follows. Probable catalytically inactive kinase. Scaffolding protein that regulates the cytoskeleton to control cell spreading and migration by modulating focal adhesion dynamics. Acts as a scaffold for mediating EGFR signaling. The polypeptide is Inactive tyrosine-protein kinase PEAK1 (PEAK1) (Homo sapiens (Human)).